Here is a 460-residue protein sequence, read N- to C-terminus: Endoglucanase C (460 aa).

An N-terminal signal peptide occupies residues 1 to 32 (MIKGSSLKRFKSLVMAAIFSVSIISTAIASSA). Catalysis depends on Glu99, which acts as the Proton donor. Residue Asp155 is the Nucleophile of the active site. Positions 400 to 460 (KPDLKGDVNN…FAQLKVKLLN (61 aa)) constitute a Dockerin domain.

The protein belongs to the glycosyl hydrolase 8 (cellulase D) family. As to quaternary structure, monomer. There are two forms of the cellulase. The shorter form lacks probably the C-terminal reiterated domains.

The enzyme catalyses Endohydrolysis of (1-&gt;4)-beta-D-glucosidic linkages in cellulose, lichenin and cereal beta-D-glucans.. Its pathway is glycan metabolism; cellulose degradation. In terms of biological role, the biological conversion of cellulose to glucose generally requires three types of hydrolytic enzymes: (1) Endoglucanases which cut internal beta-1,4-glucosidic bonds; (2) Exocellobiohydrolases that cut the disaccharide cellobiose from the non-reducing end of the cellulose polymer chain; (3) Beta-1,4-glucosidases which hydrolyze the cellobiose and other short cello-oligosaccharides to glucose. The polypeptide is Endoglucanase C (celCCC) (Ruminiclostridium cellulolyticum (strain ATCC 35319 / DSM 5812 / JCM 6584 / H10) (Clostridium cellulolyticum)).